Here is a 49-residue protein sequence, read N- to C-terminus: Small, acid-soluble spore protein O (49 aa).

The tract at residues 1-49 is disordered; sequence MGKRKANHTISGMNAASAQGQGTGYNEEFANEPLTPAERQNNKKRKKNQ. A compositionally biased stretch (polar residues) spans 8–20; the sequence is HTISGMNAASAQG.

It belongs to the SspO family.

The protein localises to the spore core. This is Small, acid-soluble spore protein O from Bacillus cereus (strain B4264).